Reading from the N-terminus, the 199-residue chain is NAD(P)H dehydrogenase (quinone) (199 aa).

The region spanning 4–190 (VLVLYYSAYG…AGARYQGQVI (187 aa)) is the Flavodoxin-like domain. FMN contacts are provided by residues 10 to 15 (SAYGHI) and 78 to 80 (TRF). Position 12 (Y12) interacts with NAD(+). W98 is a substrate binding site. Residues 113–119 (STATQHG) and H134 each bind FMN.

Belongs to the WrbA family. FMN is required as a cofactor.

The catalysed reaction is a quinone + NADH + H(+) = a quinol + NAD(+). The enzyme catalyses a quinone + NADPH + H(+) = a quinol + NADP(+). The protein is NAD(P)H dehydrogenase (quinone) of Rhodopseudomonas palustris (strain BisA53).